The chain runs to 103 residues: UPF0145 protein RSKD131_1772 (103 aa).

Belongs to the UPF0145 family.

This Cereibacter sphaeroides (strain KD131 / KCTC 12085) (Rhodobacter sphaeroides) protein is UPF0145 protein RSKD131_1772.